Consider the following 246-residue polypeptide: tRNA (guanine-N(1)-)-methyltransferase (246 aa).

S-adenosyl-L-methionine-binding positions include glycine 113 and leucine 132–leucine 137.

It belongs to the RNA methyltransferase TrmD family. Homodimer.

Its subcellular location is the cytoplasm. The enzyme catalyses guanosine(37) in tRNA + S-adenosyl-L-methionine = N(1)-methylguanosine(37) in tRNA + S-adenosyl-L-homocysteine + H(+). In terms of biological role, specifically methylates guanosine-37 in various tRNAs. This chain is tRNA (guanine-N(1)-)-methyltransferase, found in Lactiplantibacillus plantarum (strain ATCC BAA-793 / NCIMB 8826 / WCFS1) (Lactobacillus plantarum).